A 245-amino-acid chain; its full sequence is Ribonuclease 3 (245 aa).

The 130-residue stretch at 19–148 (FRAFQQKLGI…FIGALYLDQG (130 aa)) folds into the RNase III domain. Glutamate 61 is a Mg(2+) binding site. Aspartate 65 is a catalytic residue. The Mg(2+) site is built by aspartate 134 and glutamate 137. Glutamate 137 is a catalytic residue. In terms of domain architecture, DRBM spans 174-243 (DYKSQLQELI…AAEALRKLKE (70 aa)).

Belongs to the ribonuclease III family. In terms of assembly, homodimer. Mg(2+) is required as a cofactor.

It is found in the cytoplasm. The enzyme catalyses Endonucleolytic cleavage to 5'-phosphomonoester.. Functionally, digests double-stranded RNA. Involved in the processing of primary rRNA transcript to yield the immediate precursors to the large and small rRNAs (23S and 16S). Processes some mRNAs, and tRNAs when they are encoded in the rRNA operon. Processes pre-crRNA and tracrRNA of type II CRISPR loci if present in the organism. The polypeptide is Ribonuclease 3 (Bacillus cytotoxicus (strain DSM 22905 / CIP 110041 / 391-98 / NVH 391-98)).